The chain runs to 284 residues: Efem/EfeO family lipoprotein (284 aa).

An N-terminal signal peptide occupies residues 1–17 (MKKLTTLLLASTLLIAA). Cys18 carries N-palmitoyl cysteine lipidation. A lipid anchor (S-diacylglycerol cysteine) is attached at Cys18.

It belongs to the EfeM/EfeO family.

It localises to the cell membrane. This Staphylococcus aureus (strain USA300) protein is Efem/EfeO family lipoprotein.